The sequence spans 1401 residues: DNA-directed RNA polymerase subunit beta' (1401 aa).

Zn(2+) contacts are provided by Cys-71, Cys-73, Cys-86, and Cys-89. Mg(2+) contacts are provided by Asp-462, Asp-464, and Asp-466. Zn(2+) contacts are provided by Cys-810, Cys-884, Cys-891, and Cys-894. The interval 1377-1401 is disordered; that stretch reads RRKGTGAESATPMLADMANDPAAAE.

This sequence belongs to the RNA polymerase beta' chain family. The RNAP catalytic core consists of 2 alpha, 1 beta, 1 beta' and 1 omega subunit. When a sigma factor is associated with the core the holoenzyme is formed, which can initiate transcription. Requires Mg(2+) as cofactor. The cofactor is Zn(2+).

The catalysed reaction is RNA(n) + a ribonucleoside 5'-triphosphate = RNA(n+1) + diphosphate. DNA-dependent RNA polymerase catalyzes the transcription of DNA into RNA using the four ribonucleoside triphosphates as substrates. The chain is DNA-directed RNA polymerase subunit beta' from Rhizobium meliloti (strain 1021) (Ensifer meliloti).